The following is a 386-amino-acid chain: Formate-dependent phosphoribosylglycinamide formyltransferase (386 aa).

Residues 15–16 and glutamate 75 contribute to the N(1)-(5-phospho-beta-D-ribosyl)glycinamide site; that span reads EL. Residues arginine 107, lysine 148, 153 to 158, 188 to 191, and glutamate 196 contribute to the ATP site; these read SSGKGQ and EQFI. The 190-residue stretch at 112-301 folds into the ATP-grasp domain; sequence ALAAQQLNLQ…EFELHLRAIV (190 aa). Residues glutamate 260 and glutamate 272 each contribute to the Mg(2+) site. N(1)-(5-phospho-beta-D-ribosyl)glycinamide is bound by residues aspartate 279, lysine 349, and 356 to 357; that span reads RR.

Belongs to the PurK/PurT family. Homodimer.

It carries out the reaction N(1)-(5-phospho-beta-D-ribosyl)glycinamide + formate + ATP = N(2)-formyl-N(1)-(5-phospho-beta-D-ribosyl)glycinamide + ADP + phosphate + H(+). It participates in purine metabolism; IMP biosynthesis via de novo pathway; N(2)-formyl-N(1)-(5-phospho-D-ribosyl)glycinamide from N(1)-(5-phospho-D-ribosyl)glycinamide (formate route): step 1/1. Functionally, involved in the de novo purine biosynthesis. Catalyzes the transfer of formate to 5-phospho-ribosyl-glycinamide (GAR), producing 5-phospho-ribosyl-N-formylglycinamide (FGAR). Formate is provided by PurU via hydrolysis of 10-formyl-tetrahydrofolate. In Francisella tularensis subsp. novicida (strain U112), this protein is Formate-dependent phosphoribosylglycinamide formyltransferase.